The primary structure comprises 455 residues: Venom prothrombin activator hopsarin-D (455 aa).

Positions 1-20 (MAPQLLLCLILTFLWSVPEA) are cleaved as a signal peptide. A propeptide spanning residues 21–40 (ESNVFLKSKVANRFLQRTKR) is cleaved from the precursor. Positions 41-86 (SNSLFEEIRPGNIERECIEEKCSKEEAREVFEDNEKTETFWNVYVD) constitute a Gla domain. 4-carboxyglutamate occurs at positions 46, 47, 54, 56, 59, 60, 65, 66, 69, 72, and 75. A disulfide bridge links Cys57 with Cys62. The 36-residue stretch at 86-121 (DGDQCSSNPCHYHGTCKDGIGSYTCTCLPNYEGKNC) folds into the EGF-like 1; calcium-binding domain. 10 cysteine pairs are disulfide-bonded: Cys90–Cys101, Cys95–Cys110, Cys112–Cys121, Cys129–Cys140, Cys136–Cys149, Cys151–Cys164, Cys172–Cys328, Cys236–Cys252, Cys376–Cys390, and Cys401–Cys429. An O-linked (Hex...) serine glycan is attached at Ser92. Positions 129–164 (CRAFNGNCWHFCKRVQSETQCSCAESYRLGVDGHSC) constitute an EGF-like 2 domain. Residues 182-209 (REASLPDFVQSQKATLLKKSDNPSPDIR) constitute a propeptide, activation peptide. The Peptidase S1 domain maps to 210–453 (IVNGMDSKLG…FIPWIKKIMS (244 aa)). His251 acts as the Charge relay system in catalysis. Asn254 carries an N-linked (GlcNAc...) asparagine glycan. The Charge relay system role is filled by Asp308. The active-site Charge relay system is Ser405.

The protein belongs to the peptidase S1 family. Snake venom subfamily. As to quaternary structure, heterodimer of a light chain and a heavy chain; disulfide-linked. Post-translationally, the vitamin K-dependent, enzymatic carboxylation of some glutamate residues allows the modified protein to bind calcium. Expressed by the venom gland.

It localises to the secreted. The catalysed reaction is Selective cleavage of Arg-|-Thr and then Arg-|-Ile bonds in prothrombin to form thrombin.. Its function is as follows. Snake prothrombin activator that attacks the hemostatic system of prey. This protein is functionally similar to blood coagulation factor Xa. The procoagulant activity of hopsarin-D is approximately 10-fold lower than that of trocarin-D and FXa. In Hoplocephalus stephensii (Stephens's banded snake), this protein is Venom prothrombin activator hopsarin-D.